Reading from the N-terminus, the 142-residue chain is Tol-Pal system protein TolR (142 aa).

Topologically, residues methionine 1–asparagine 17 are cytoplasmic. A helical membrane pass occupies residues isoleucine 18–isoleucine 38. The Periplasmic segment spans residues isoleucine 39–isoleucine 142.

This sequence belongs to the ExbD/TolR family. In terms of assembly, the Tol-Pal system is composed of five core proteins: the inner membrane proteins TolA, TolQ and TolR, the periplasmic protein TolB and the outer membrane protein Pal. They form a network linking the inner and outer membranes and the peptidoglycan layer.

It localises to the cell inner membrane. In terms of biological role, part of the Tol-Pal system, which plays a role in outer membrane invagination during cell division and is important for maintaining outer membrane integrity. Required, with TolQ, for the proton motive force-dependent activation of TolA and for TolA-Pal interaction. This Escherichia coli O157:H7 protein is Tol-Pal system protein TolR.